Reading from the N-terminus, the 82-residue chain is Defensin-like protein 22 (82 aa).

Positions 1–24 (MAGLKVFSFALLLILTFSLIDVEG) are cleaved as a signal peptide. 4 cysteine pairs are disulfide-bonded: cysteine 34/cysteine 82, cysteine 44/cysteine 69, cysteine 53/cysteine 78, and cysteine 57/cysteine 80.

This sequence belongs to the DEFL family.

The protein resides in the secreted. This chain is Defensin-like protein 22, found in Arabidopsis thaliana (Mouse-ear cress).